The chain runs to 332 residues: Ferredoxin--NADP reductase (332 aa).

FAD-binding residues include D33, Q41, Y46, A86, F120, D286, and T327.

It belongs to the ferredoxin--NADP reductase type 2 family. In terms of assembly, homodimer. FAD serves as cofactor.

It carries out the reaction 2 reduced [2Fe-2S]-[ferredoxin] + NADP(+) + H(+) = 2 oxidized [2Fe-2S]-[ferredoxin] + NADPH. This is Ferredoxin--NADP reductase from Rickettsia bellii (strain OSU 85-389).